The following is a 461-amino-acid chain: Armadillo repeat-containing X-linked protein 1 (461 aa).

The Mitochondrial intermembrane portion of the chain corresponds to 1–6 (MGRTRE). 2 mitochondrion outer membrane (MOM)-targeting sequence regions span residues 1–6 (MGRTRE) and 26–36 (RLTWGKDENEK). A helical; Signal-anchor membrane pass occupies residues 7 to 29 (AGCVAAGMVIGAGACYCVYRLTW). At 30–461 (GKDENEKLWD…VKVLKVLTKL (432 aa)) the chain is on the cytoplasmic side. Disordered regions lie at residues 34 to 110 (NEKL…HSEG) and 148 to 192 (SSLP…PATA). The segment covering 38–51 (WDDEDEEEEEEEES) has biased composition (acidic residues). Basic and acidic residues predominate over residues 96 to 110 (PDVKKEVYPESHSEG). Basic residues predominate over residues 167-185 (SRARNRTSGKVKRKNRSKS). ARM repeat units lie at residues 203–243 (PYKI…NNAA), 245–284 (SFNQ…NLSV), 366–406 (PAMT…NIND), and 423–461 (SSLF…LTKL).

Belongs to the eutherian X-chromosome-specific Armcx family. As to quaternary structure, interacts with MIRO1.

It is found in the mitochondrion. It localises to the mitochondrion outer membrane. Regulates mitochondrial transport during axon regeneration. Increases the proportion of motile mitochondria by recruiting stationary mitochondria into the motile pool. Enhances mitochondria movement and neurite growth in both adult axons and embryonic neurons. Promotes neuronal survival and axon regeneration after nerve injury. May link mitochondria to the Trak1-kinesin motor complex via its interaction with MIRO1. This is Armadillo repeat-containing X-linked protein 1 (Armcx1) from Rattus norvegicus (Rat).